Consider the following 203-residue polypeptide: MEGAELIIQEINREAEQKIQYILSEAKEEAEKLKEEARKRAEAKAEWILRKAKTQAEIEKQRIIANAKLEVRKKKLAVQEELIRSVIESLKERLANLPEDEYFPMLVELTVKAVEELGTDKVVVRSNERTLKLIVERLSEFREKLREALGKDVEVTVGEPIQTIGGILVESSDGTVRVDNTFDSRIERFESDLRATIAKALFG.

This sequence belongs to the V-ATPase E subunit family. As to quaternary structure, has multiple subunits with at least A(3), B(3), C, D, E, F, H, I and proteolipid K(x).

Its subcellular location is the cell membrane. Its function is as follows. Component of the A-type ATP synthase that produces ATP from ADP in the presence of a proton gradient across the membrane. The protein is A-type ATP synthase subunit E of Desulfurococcus sp. (strain SY).